The primary structure comprises 322 residues: Breast cancer metastasis-suppressor 1-like protein (322 aa).

Positions 1–16 are enriched in basic and acidic residues; sequence MPVHSREKKESNHNDM. The segment at 1–56 is disordered; that stretch reads MPVHSREKKESNHNDMEVDYPENEGSSSEEDDSDSSSGSEEGDSSEMDDEDCERRR. A compositionally biased stretch (acidic residues) spans 17-51; it reads EVDYPENEGSSSEEDDSDSSSGSEEGDSSEMDDED. 2 coiled-coil regions span residues 50 to 99 and 147 to 178; these read EDCE…QAQE and EKLL…ITSE.

The protein belongs to the BRMS1 family.

Its subcellular location is the nucleus. Functionally, involved in the histone deacetylase (HDAC1)-dependent transcriptional repression activity. This Xenopus laevis (African clawed frog) protein is Breast cancer metastasis-suppressor 1-like protein (brms1l).